The following is a 194-amino-acid chain: MEEKDKEEKVTGENLEPEDKNLEQEDKEEVVGPQEEQQIDEAKNWEEEYNKLLDEHNRLKNQYLRLYADFDNYRKRTQREKEELLKYEGMEFLKKLLPVLDNFERALKEKDTDPQKVIEGVELTHRQLLEILNQHEVKAIEAQGQPFNPELHEALMVEVREDLEENTVIEELVKGYFYKDKVLRPALVKVSKKQ.

The segment covering 1–24 (MEEKDKEEKVTGENLEPEDKNLEQ) has biased composition (basic and acidic residues). The tract at residues 1 to 41 (MEEKDKEEKVTGENLEPEDKNLEQEDKEEVVGPQEEQQIDE) is disordered.

The protein belongs to the GrpE family. As to quaternary structure, homodimer.

The protein resides in the cytoplasm. Functionally, participates actively in the response to hyperosmotic and heat shock by preventing the aggregation of stress-denatured proteins, in association with DnaK and GrpE. It is the nucleotide exchange factor for DnaK and may function as a thermosensor. Unfolded proteins bind initially to DnaJ; upon interaction with the DnaJ-bound protein, DnaK hydrolyzes its bound ATP, resulting in the formation of a stable complex. GrpE releases ADP from DnaK; ATP binding to DnaK triggers the release of the substrate protein, thus completing the reaction cycle. Several rounds of ATP-dependent interactions between DnaJ, DnaK and GrpE are required for fully efficient folding. The sequence is that of Protein GrpE from Carboxydothermus hydrogenoformans (strain ATCC BAA-161 / DSM 6008 / Z-2901).